Here is a 308-residue protein sequence, read N- to C-terminus: Ornithine carbamoyltransferase (308 aa).

Residues 56-59, glutamine 83, arginine 107, and 134-137 contribute to the carbamoyl phosphate site; these read STRT and HPCQ. L-ornithine-binding positions include asparagine 165, aspartate 225, and 229–230; that span reads SM. Carbamoyl phosphate-binding positions include 266 to 267 and arginine 294; that span reads CL.

This sequence belongs to the aspartate/ornithine carbamoyltransferase superfamily. OTCase family.

It is found in the cytoplasm. It carries out the reaction carbamoyl phosphate + L-ornithine = L-citrulline + phosphate + H(+). Its pathway is amino-acid degradation; L-arginine degradation via ADI pathway; carbamoyl phosphate from L-arginine: step 2/2. Reversibly catalyzes the transfer of the carbamoyl group from carbamoyl phosphate (CP) to the N(epsilon) atom of ornithine (ORN) to produce L-citrulline. This is Ornithine carbamoyltransferase from Cereibacter sphaeroides (strain KD131 / KCTC 12085) (Rhodobacter sphaeroides).